We begin with the raw amino-acid sequence, 798 residues long: Galactinol--sucrose galactosyltransferase (798 aa).

It belongs to the glycosyl hydrolases 36 family.

The enzyme catalyses alpha-D-galactosyl-(1-&gt;3)-1D-myo-inositol + sucrose = raffinose + myo-inositol. Its activity is regulated as follows. Inhibited by 1-deoxygalactonojirimycin. Not inhibited by stachyose. Strong inhibition of the hydrolytic activity by sucrose. Its function is as follows. Transglycosidase operating by a ping-pong reaction mechanism. Involved in the synthesis of raffinose, a major soluble carbohydrate in seeds, roots and tubers. Able to utilize D-ononitol and D-pinitol as acceptors. May also act as a glycoside hydrolase. The protein is Galactinol--sucrose galactosyltransferase (RFS) of Pisum sativum (Garden pea).